A 472-amino-acid chain; its full sequence is Eukaryotic translation initiation factor 2 subunit 3 (472 aa).

Alanine 2 is subject to N-acetylalanine; partial. At serine 16 the chain carries Phosphoserine. In terms of domain architecture, tr-type G spans 39 to 248 (QATINIGTIG…IVKKIPVPPR (210 aa)). The interval 48 to 55 (GHVAHGKS) is G1. Residue 51–56 (AHGKST) participates in GTP binding. A G2 region spans residues 76-80 (NITIK). The G3 stretch occupies residues 134-137 (DCPG). Residues 190–193 (NKID) and 225–227 (SAQ) each bind GTP. Residues 190–193 (NKID) form a G4 region. Residues 225-227 (SAQ) are G5. The interacts with CDC123 stretch occupies residues 457-469 (GQIRRGVTIKPTV).

Belongs to the TRAFAC class translation factor GTPase superfamily. Classic translation factor GTPase family. EIF2G subfamily. Eukaryotic translation initiation factor 2 eIF2 is a heterotrimeric complex composed of an alpha (EIF2S1), a beta (EIF2S2) and a gamma (EIF2S3) chain. eIF2 is member of the 43S pre-initiation complex (43S PIC). Interacts (via C-terminus) with CDC123; the interaction is direct. Expressed in testis, brain, liver and muscle.

The protein localises to the cytoplasm. The protein resides in the cytosol. It carries out the reaction GTP + H2O = GDP + phosphate + H(+). Its function is as follows. Member of the eIF2 complex that functions in the early steps of protein synthesis by forming a ternary complex with GTP and initiator tRNA. This complex binds to a 40S ribosomal subunit, followed by mRNA binding to form the 43S pre-initiation complex (43S PIC). Junction of the 60S ribosomal subunit to form the 80S initiation complex is preceded by hydrolysis of the GTP bound to eIF2 and release of an eIF2-GDP binary complex. In order for eIF2 to recycle and catalyze another round of initiation, the GDP bound to eIF2 must exchange with GTP by way of a reaction catalyzed by eIF-2B. The chain is Eukaryotic translation initiation factor 2 subunit 3 (EIF2S3) from Homo sapiens (Human).